A 101-amino-acid chain; its full sequence is Small ribosomal subunit protein bS18c (101 aa).

Belongs to the bacterial ribosomal protein bS18 family. As to quaternary structure, part of the 30S ribosomal subunit.

It is found in the plastid. Its subcellular location is the chloroplast. In Aethionema grandiflorum (Persian stone-cress), this protein is Small ribosomal subunit protein bS18c.